A 498-amino-acid polypeptide reads, in one-letter code: Glycylpeptide N-tetradecanoyltransferase 2 (498 aa).

The disordered stretch occupies residues 1-88; sequence MAEDSESAAS…QPSKNPSVPM (88 aa). Positions 15–32 are enriched in acidic residues; that stretch reads ELDDQDTCGIDGDNEEET. Ser-38 carries the phosphoserine modification. Basic residues predominate over residues 45–57; it reads AKKKKKKQKRKKE. Residues 61–86 show a composition bias toward polar residues; it reads SGGTKSDSASDSQEIKIQQPSKNPSV. Tetradecanoyl-CoA contacts are provided by His-117, Trp-122, Leu-250, Val-252, Ser-258, Arg-260, Val-261, and Ala-262.

The protein belongs to the NMT family.

It is found in the cytoplasm. It localises to the membrane. The enzyme catalyses N-terminal glycyl-[protein] + tetradecanoyl-CoA = N-tetradecanoylglycyl-[protein] + CoA + H(+). It carries out the reaction N-terminal glycyl-L-lysyl-[protein] + tetradecanoyl-CoA = N-terminal glycyl-(N(6)-tetradecanoyl)-L-lysyl-[protein] + CoA + H(+). Adds a myristoyl group to the N-terminal glycine residue of certain cellular and viral proteins. Also able to mediate N-terminal lysine myristoylation of proteins: catalyzes myristoylation of ARF6 on both 'Gly-2' and 'Lys-3'. Lysine myristoylation is required to maintain ARF6 on membranes during the GTPase cycle. This Homo sapiens (Human) protein is Glycylpeptide N-tetradecanoyltransferase 2.